Here is a 153-residue protein sequence, read N- to C-terminus: Endoribonuclease YbeY (153 aa).

Zn(2+) is bound by residues H114, H118, and H124.

It belongs to the endoribonuclease YbeY family. Zn(2+) is required as a cofactor.

Its subcellular location is the cytoplasm. Functionally, single strand-specific metallo-endoribonuclease involved in late-stage 70S ribosome quality control and in maturation of the 3' terminus of the 16S rRNA. The polypeptide is Endoribonuclease YbeY (Shewanella oneidensis (strain ATCC 700550 / JCM 31522 / CIP 106686 / LMG 19005 / NCIMB 14063 / MR-1)).